Here is a 1416-residue protein sequence, read N- to C-terminus: DNA-directed RNA polymerase subunit beta' (1416 aa).

The Zn(2+) site is built by Cys-71, Cys-73, Cys-86, and Cys-89. The Mg(2+) site is built by Asp-461, Asp-463, and Asp-465. Zn(2+) is bound by residues Cys-815, Cys-889, Cys-896, and Cys-899.

Belongs to the RNA polymerase beta' chain family. As to quaternary structure, the RNAP catalytic core consists of 2 alpha, 1 beta, 1 beta' and 1 omega subunit. When a sigma factor is associated with the core the holoenzyme is formed, which can initiate transcription. Mg(2+) is required as a cofactor. Zn(2+) serves as cofactor.

The enzyme catalyses RNA(n) + a ribonucleoside 5'-triphosphate = RNA(n+1) + diphosphate. DNA-dependent RNA polymerase catalyzes the transcription of DNA into RNA using the four ribonucleoside triphosphates as substrates. In Haemophilus influenzae (strain 86-028NP), this protein is DNA-directed RNA polymerase subunit beta'.